Consider the following 199-residue polypeptide: Recombination protein RecR (199 aa).

A C4-type zinc finger spans residues 57–72 (CERCNNLSEAPLCAVC). The region spanning 80-174 (SILCVVESPA…TISRIARGVP (95 aa)) is the Toprim domain.

Belongs to the RecR family.

Functionally, may play a role in DNA repair. It seems to be involved in an RecBC-independent recombinational process of DNA repair. It may act with RecF and RecO. The polypeptide is Recombination protein RecR (Acidithiobacillus ferrooxidans (strain ATCC 23270 / DSM 14882 / CIP 104768 / NCIMB 8455) (Ferrobacillus ferrooxidans (strain ATCC 23270))).